We begin with the raw amino-acid sequence, 214 residues long: Probable transaldolase (214 aa).

Residue K83 is the Schiff-base intermediate with substrate of the active site.

This sequence belongs to the transaldolase family. Type 3B subfamily.

The protein resides in the cytoplasm. The catalysed reaction is D-sedoheptulose 7-phosphate + D-glyceraldehyde 3-phosphate = D-erythrose 4-phosphate + beta-D-fructose 6-phosphate. It participates in carbohydrate degradation; pentose phosphate pathway; D-glyceraldehyde 3-phosphate and beta-D-fructose 6-phosphate from D-ribose 5-phosphate and D-xylulose 5-phosphate (non-oxidative stage): step 2/3. Functionally, transaldolase is important for the balance of metabolites in the pentose-phosphate pathway. This chain is Probable transaldolase, found in Desulfosudis oleivorans (strain DSM 6200 / JCM 39069 / Hxd3) (Desulfococcus oleovorans).